We begin with the raw amino-acid sequence, 78 residues long: Translation initiation factor IF-1, chloroplastic (78 aa).

The S1-like domain maps to 1-72 (MKKQKLIDME…TKGRITYRFH (72 aa)).

It belongs to the IF-1 family. In terms of assembly, component of the 30S ribosomal translation pre-initiation complex which assembles on the 30S ribosome in the order IF-2 and IF-3, IF-1 and N-formylmethionyl-tRNA(fMet); mRNA recruitment can occur at any time during PIC assembly.

It localises to the plastid. It is found in the chloroplast. Functionally, one of the essential components for the initiation of protein synthesis. Stabilizes the binding of IF-2 and IF-3 on the 30S subunit to which N-formylmethionyl-tRNA(fMet) subsequently binds. Helps modulate mRNA selection, yielding the 30S pre-initiation complex (PIC). Upon addition of the 50S ribosomal subunit IF-1, IF-2 and IF-3 are released leaving the mature 70S translation initiation complex. The chain is Translation initiation factor IF-1, chloroplastic from Huperzia lucidula (Shining clubmoss).